The sequence spans 262 residues: Lysosomal-associated transmembrane protein 5 (262 aa).

5 helical membrane-spanning segments follow: residues 19-39 (IATT…FIEH), 64-84 (ISSF…LIGV), 92-112 (LLPF…TLLG), 134-154 (FPLM…LCSS), and 184-204 (FIKM…FKVY). The residue at position 259 (Tyr-259) is a Phosphotyrosine.

It belongs to the LAPTM4/LAPTM5 transporter family. In terms of assembly, binds to ubiquitin. In terms of tissue distribution, preferentially expressed in adult hematopoietic tissues. High levels in lymphoid and myeloid tissues. Highly expressed in peripheral blood leukocytes, thymus, spleen and lung, followed by placenta, liver and kidney.

The protein resides in the lysosome membrane. Its function is as follows. May have a special functional role during embryogenesis and in adult hematopoietic cells. This is Lysosomal-associated transmembrane protein 5 (LAPTM5) from Homo sapiens (Human).